A 620-amino-acid chain; its full sequence is Translocator protein BipB (620 aa).

The segment at 58–95 is disordered; sequence QCDAQPAAHDARLDDKPALRAPQERDAPPLGASDTGSR. Over residues 66 to 84 the composition is skewed to basic and acidic residues; sequence HDARLDDKPALRAPQERDA. Positions 309–339 form a coiled coil; the sequence is EMQAKREAELQKKSDEYQAQVKKAEEMQKTM. A run of 3 helical transmembrane segments spans residues 355 to 375, 401 to 421, and 430 to 450; these read FAAA…GLAL, AILK…LVAC, and LAGA…AAFV.

The protein belongs to the SctE/SipB/YopB family.

The protein resides in the secreted. It is found in the host membrane. Its function is as follows. Plays a role in the bacterium-induced formation of multinucleated giant cell (MNGC), which is formed after host cell fusion, as well as in the intercellular spreading of bacteria and in the induction of apoptosis in macrophages. May act in concert with other effector proteins to induce fusion of host cell membranes. This chain is Translocator protein BipB (bipB), found in Burkholderia pseudomallei (strain 1106a).